The primary structure comprises 82 residues: Kappa-actitoxin-Avd4j (82 aa).

An N-terminal signal peptide occupies residues 1–19 (MNKALFLCLVVLCAAVVFA). The propeptide occupies 20–31 (AEDLQKAKHAPF). 3 disulfide bridges follow: Cys-38/Cys-73, Cys-40/Cys-66, and Cys-56/Cys-74.

Belongs to the sea anemone type 3 (BDS) potassium channel toxin family. In terms of tissue distribution, weakly expressed in the ectodermal tissue from the distal and proximal tentacles, body wall, and oral disk.

The protein resides in the secreted. The protein localises to the nematocyst. Blocks Kv3 voltage-gated potassium channels. Reduces blood pressure. This chain is Kappa-actitoxin-Avd4j, found in Anemonia viridis (Snakelocks anemone).